The primary structure comprises 343 residues: Heat-inducible transcription repressor HrcA (343 aa).

The protein belongs to the HrcA family.

Its function is as follows. Negative regulator of class I heat shock genes (grpE-dnaK-dnaJ and groELS operons). Prevents heat-shock induction of these operons. This Thermoanaerobacter pseudethanolicus (strain ATCC 33223 / 39E) (Clostridium thermohydrosulfuricum) protein is Heat-inducible transcription repressor HrcA.